We begin with the raw amino-acid sequence, 107 residues long: Protein phosphatase 1 regulatory subunit INH3 (107 aa).

Residues 1 to 14 (MSTATRPSSSATTS) show a composition bias toward low complexity. 2 disordered regions span residues 1 to 40 (MSTA…KKKK) and 69 to 107 (PFDE…KAVD). The segment covering 71 to 80 (DEDDSEEEDD) has biased composition (acidic residues). The segment covering 81–94 (NNHHCDHNHEHSES) has biased composition (basic and acidic residues). Residues 95 to 107 (GEASSSNDSKAVD) show a composition bias toward low complexity.

As to quaternary structure, interacts with protein phosphatase 1. Expressed in roots, cotyledons, leaves, flowers and embryos.

Its function is as follows. Inhibitor of protein-phosphatase 1 (PP1). Binds to and inhibits PP1 activity. Required for early embryogenesis progression. In Arabidopsis thaliana (Mouse-ear cress), this protein is Protein phosphatase 1 regulatory subunit INH3.